The chain runs to 294 residues: ATP synthase gamma chain (294 aa).

The protein belongs to the ATPase gamma chain family. In terms of assembly, F-type ATPases have 2 components, CF(1) - the catalytic core - and CF(0) - the membrane proton channel. CF(1) has five subunits: alpha(3), beta(3), gamma(1), delta(1), epsilon(1). CF(0) has three main subunits: a, b and c.

It is found in the cell inner membrane. Its function is as follows. Produces ATP from ADP in the presence of a proton gradient across the membrane. The gamma chain is believed to be important in regulating ATPase activity and the flow of protons through the CF(0) complex. This is ATP synthase gamma chain from Campylobacter jejuni subsp. jejuni serotype O:23/36 (strain 81-176).